The following is a 459-amino-acid chain: Argininosuccinate lyase (459 aa).

It belongs to the lyase 1 family. Argininosuccinate lyase subfamily.

Its subcellular location is the cytoplasm. The enzyme catalyses 2-(N(omega)-L-arginino)succinate = fumarate + L-arginine. Its pathway is amino-acid biosynthesis; L-arginine biosynthesis; L-arginine from L-ornithine and carbamoyl phosphate: step 3/3. This Staphylococcus aureus (strain Mu3 / ATCC 700698) protein is Argininosuccinate lyase.